The sequence spans 387 residues: Small ribosomal subunit biogenesis GTPase RsgA (387 aa).

The region spanning 112 to 273 is the CP-type G domain; sequence YDGLKPVAAN…LIDSPGVREF (162 aa). Residues 159 to 162 and 213 to 221 each bind GTP; these read NKID and GQSGVGKSS. Residues Cys297, Cys302, His304, and Cys310 each contribute to the Zn(2+) site.

Belongs to the TRAFAC class YlqF/YawG GTPase family. RsgA subfamily. As to quaternary structure, monomer. Associates with 30S ribosomal subunit, binds 16S rRNA. Requires Zn(2+) as cofactor.

It localises to the cytoplasm. One of several proteins that assist in the late maturation steps of the functional core of the 30S ribosomal subunit. Helps release RbfA from mature subunits. May play a role in the assembly of ribosomal proteins into the subunit. Circularly permuted GTPase that catalyzes slow GTP hydrolysis, GTPase activity is stimulated by the 30S ribosomal subunit. The polypeptide is Small ribosomal subunit biogenesis GTPase RsgA (Vibrio cholerae serotype O1 (strain ATCC 39315 / El Tor Inaba N16961)).